Reading from the N-terminus, the 143-residue chain is MELNGIKPAAGAKHAKRRVGRGIGSGIGKTAGRGHKGQKSRAGGFHKVGFEGGQMPLQRRLPKRGFKSHLLKFNAEVTLTALEQLGLAEVDILALKQAGLVGQLAKVVKIVKTGELTKAVKLTGVGATAGAKAAIEAAGGSVA.

A disordered region spans residues 1–51 (MELNGIKPAAGAKHAKRRVGRGIGSGIGKTAGRGHKGQKSRAGGFHKVGFE). The span at 21 to 31 (RGIGSGIGKTA) shows a compositional bias: gly residues.

The protein belongs to the universal ribosomal protein uL15 family. As to quaternary structure, part of the 50S ribosomal subunit.

Binds to the 23S rRNA. This is Large ribosomal subunit protein uL15 from Variovorax paradoxus (strain S110).